Consider the following 475-residue polypeptide: Ammonium transporter Rh type C (475 aa).

Residues 1 to 20 (MGCVQSFRNFCDRPKNTNVR) are Cytoplasmic-facing. Residues 21 to 41 (ISLPAVCFVWQIAMIILFGVF) traverse the membrane as a helical segment. The Extracellular portion of the chain corresponds to 42–73 (IRYNEEADTHWVEYRKKENISSDIENDFYFRY). Residue Asn-60 is glycosylated (N-linked (GlcNAc...) asparagine). The helical transmembrane segment at 74–94 (PSFQDVHVMIFVGFGFLMTFL) threads the bilayer. The Cytoplasmic segment spans residues 95–98 (KRYS). The helical transmembrane segment at 99–119 (FGAVGFNFLIAAFGLQWALLM) threads the bilayer. Topologically, residues 120–138 (QGWFHSLDYTDGKIKIGIE) are extracellular. The helical transmembrane segment at 139-159 (NLINADFCVAGCLIAYGAVLG) threads the bilayer. The Cytoplasmic segment spans residues 160-167 (KVSPVQLM). A helical membrane pass occupies residues 168-188 (VLTLFGITLFAVEEYIILNLI). The Extracellular segment spans residues 189 to 193 (HARDA). The helical transmembrane segment at 194 to 214 (GGSMVIHTFGGYYGLSISWML) threads the bilayer. Over 215–233 (YRPNLEQSSNLQGSVYQSD) the chain is Cytoplasmic. Residues 234 to 254 (VFAMIGTLFLWMFWPSFNSAI) form a helical membrane-spanning segment. Over 255–265 (TDHGDGQHRAA) the chain is Extracellular. Residues 266–286 (INTYLALASTVLTTVAISSLF) form a helical membrane-spanning segment. Residues 287–299 (QKHGKLDMVHIQN) lie on the Cytoplasmic side of the membrane. Residues 300–320 (STLAGGVAVGTAAEFMLMPYG) form a helical membrane-spanning segment. Position 321 (Ser-321) is a topological domain, extracellular. Residues 322-342 (LIVGFCCGIISTLGYIYLTPF) form a helical membrane-spanning segment. Residues 343–357 (MEKYLKIQDTCGIHN) are Cytoplasmic-facing. The chain crosses the membrane as a helical span at residues 358 to 378 (LHAMPGLIGGIVGAITAAAAT). Topologically, residues 379–410 (ESVYGKEGLVNTFDFVGPFKNMVPTTQGGHQA) are extracellular. The chain crosses the membrane as a helical span at residues 411–431 (AGLCVAICFGIGGGIMVGCIL). Over 432–475 (RLPIWCDPADDNCFNDEPYWELPEEEEIIPPILHYNNHMVNKDV) the chain is Cytoplasmic.

The protein belongs to the ammonium transporter (TC 2.A.49) family. Rh subfamily. As to quaternary structure, homotrimer.

The protein localises to the apical cell membrane. Its function is as follows. Functions as an ammonia transporter. May play a role in the elimination of ammonia in the gill. The chain is Ammonium transporter Rh type C (rhcg) from Tetraodon nigroviridis (Spotted green pufferfish).